Consider the following 305-residue polypeptide: Probable DNA-invertase y4cG (305 aa).

Residues 15–148 (RLIGYARVST…SGMQAAKARG (134 aa)) enclose the Resolvase/invertase-type recombinase catalytic domain. Serine 23 functions as the O-(5'-phospho-DNA)-serine intermediate in the catalytic mechanism.

This sequence belongs to the site-specific recombinase resolvase family.

The sequence is that of Probable DNA-invertase y4cG from Sinorhizobium fredii (strain NBRC 101917 / NGR234).